Consider the following 289-residue polypeptide: 4-hydroxy-3-methylbut-2-enyl diphosphate reductase (289 aa).

A [4Fe-4S] cluster-binding site is contributed by C13. Residues H42 and H76 each coordinate (2E)-4-hydroxy-3-methylbut-2-enyl diphosphate. Positions 42 and 76 each coordinate dimethylallyl diphosphate. The isopentenyl diphosphate site is built by H42 and H76. C98 is a binding site for [4Fe-4S] cluster. H130 contacts (2E)-4-hydroxy-3-methylbut-2-enyl diphosphate. H130 contributes to the dimethylallyl diphosphate binding site. H130 is an isopentenyl diphosphate binding site. E132 functions as the Proton donor in the catalytic mechanism. T168 contributes to the (2E)-4-hydroxy-3-methylbut-2-enyl diphosphate binding site. C199 lines the [4Fe-4S] cluster pocket. (2E)-4-hydroxy-3-methylbut-2-enyl diphosphate is bound by residues S227, S228, N229, and S272. The dimethylallyl diphosphate site is built by S227, S228, N229, and S272. Isopentenyl diphosphate contacts are provided by S227, S228, N229, and S272.

Belongs to the IspH family. Requires [4Fe-4S] cluster as cofactor.

The catalysed reaction is isopentenyl diphosphate + 2 oxidized [2Fe-2S]-[ferredoxin] + H2O = (2E)-4-hydroxy-3-methylbut-2-enyl diphosphate + 2 reduced [2Fe-2S]-[ferredoxin] + 2 H(+). The enzyme catalyses dimethylallyl diphosphate + 2 oxidized [2Fe-2S]-[ferredoxin] + H2O = (2E)-4-hydroxy-3-methylbut-2-enyl diphosphate + 2 reduced [2Fe-2S]-[ferredoxin] + 2 H(+). It participates in isoprenoid biosynthesis; dimethylallyl diphosphate biosynthesis; dimethylallyl diphosphate from (2E)-4-hydroxy-3-methylbutenyl diphosphate: step 1/1. It functions in the pathway isoprenoid biosynthesis; isopentenyl diphosphate biosynthesis via DXP pathway; isopentenyl diphosphate from 1-deoxy-D-xylulose 5-phosphate: step 6/6. In terms of biological role, catalyzes the conversion of 1-hydroxy-2-methyl-2-(E)-butenyl 4-diphosphate (HMBPP) into a mixture of isopentenyl diphosphate (IPP) and dimethylallyl diphosphate (DMAPP). Acts in the terminal step of the DOXP/MEP pathway for isoprenoid precursor biosynthesis. This is 4-hydroxy-3-methylbut-2-enyl diphosphate reductase from Porphyromonas gingivalis (strain ATCC BAA-308 / W83).